The sequence spans 705 residues: MSLGPLKAINDKQLNTRSKLVHTPIKGNTADLVGKENHFKQTKRLDPNNDHHHQPAQKKKREKLSALCKTPPSLIKTRGKDYHRGHFLGEGGFARCFQIKDDSGEIFAAKTVAKASIKSEKTRKKLLSEIQIHKSMSHPNIVQFIDCFEDDSNVYILLEICPNGSLMELLKRRKVLTEPEVRFFTTQICGAIKYMHSRRVIHRDLKLGNIFFDSNYNLKIGDFGLAAVLANESERKYTICGTPNYIAPEVLMGKHSGHSFEVDIWSLGVMLYALLIGKPPFQARDVNTIYERIKCRDFSFPRDKPISDEGKILIRDILSLDPIERPSLTEIMDYVWFRGTFPPSIPSTVMSEAPNFEDIPEEQSLVNFKDCMEKSLLLESMSSDKIQRQKRDYISSIKSSIDKLEEYHQNRPFLPHSLSPGGTKQKYKEVVDIEAQRRLNDLAREARIRRAQQAVLRKELIATSTNVIKSEISLRILASECHLTLNGIVEAEAQYKMGGLPKSRLPKIKHPMIVTKWVDYSNKHGFSYQLSTEDIGVLFNNGTTVLRLADAEEFWYISYDDREGWVASHYLLSEKPRELSRHLEVVDFFAKYMKANLSRVSTFGREEYHKDDVFLRRYTRYKPFVMFELSDGTFQFNFKDHHKMAISDGGKLVTYISPSHESTTYPLVEVLKYGEIPGYPESNFREKLTLIKEGLKQKSTIVTVD.

Thr23 carries the post-translational modification Phosphothreonine. Residues 41-53 (QTKRLDPNNDHHH) show a composition bias toward basic and acidic residues. A disordered region spans residues 41-63 (QTKRLDPNNDHHHQPAQKKKREK). In terms of domain architecture, Protein kinase spans 82-337 (YHRGHFLGEG…LTEIMDYVWF (256 aa)). Residues 88–96 (LGEGGFARC) and Lys110 each bind ATP. The active-site Proton acceptor is the Asp204. Ser419 carries the post-translational modification Phosphoserine. In terms of domain architecture, POLO box 1 spans 513 to 595 (IVTKWVDYSN…VDFFAKYMKA (83 aa)). Zn(2+) contacts are provided by Glu553, His569, His609, and Asp612. The 87-residue stretch at 614-700 (FLRRYTRYKP…IKEGLKQKST (87 aa)) folds into the POLO box 2 domain.

The protein belongs to the protein kinase superfamily. Ser/Thr protein kinase family. CDC5/Polo subfamily. In terms of assembly, interacts with CDC48; the interaction is likely to result in CDC5 degradation. Interacts with CSA1.

The protein localises to the cytoplasm. It localises to the cytoskeleton. It is found in the microtubule organizing center. Its subcellular location is the spindle pole body. The enzyme catalyses L-seryl-[protein] + ATP = O-phospho-L-seryl-[protein] + ADP + H(+). It carries out the reaction L-threonyl-[protein] + ATP = O-phospho-L-threonyl-[protein] + ADP + H(+). Its function is as follows. Protein kinase required for the cell cycle where it is involved in mitotic exit. A component of the fear (CDC14 early anaphase release) network which promotes CDC14 release from the nucleolus during early anaphase. Phosphorylates SCC1/MCD1 and NET1. This Saccharomyces cerevisiae (strain ATCC 204508 / S288c) (Baker's yeast) protein is Cell cycle serine/threonine-protein kinase CDC5/MSD2 (CDC5).